The chain runs to 1321 residues: Multidrug resistance protein pgp-1 (1321 aa).

The Cytoplasmic segment spans residues 1 to 77 (MLRNGSLRQS…YTTTLEKLLL (77 aa)). Residues 77–381 (LFIGTLVAVI…AGPQLAVLGT (305 aa)) enclose the ABC transmembrane type-1 1 domain. A helical transmembrane segment spans residues 78–98 (FIGTLVAVITGAGLPLMSILQ). N-linked (GlcNAc...) asparagine glycosylation is found at N115 and N125. Residues 144-164 (AMTVGMWAAGQITVTCYLYVA) traverse the membrane as a helical segment. N-linked (GlcNAc...) asparagine glycosylation occurs at N190. 4 consecutive transmembrane segments (helical) span residues 213–233 (KIGM…VAFT), 240–260 (LVML…AKSM), 321–341 (ISFG…FYIG), and 350–370 (LNFG…MALG). The Cytoplasmic segment spans residues 371–753 (LAGPQLAVLG…LYHARPHALS (383 aa)). Residues 416 to 652 (ITVENVHFTY…QGLYYDLVTA (237 aa)) enclose the ABC transporter 1 domain. Residue 451–458 (GSSGCGKS) coordinates ATP. The next 2 helical transmembrane spans lie at 754 to 774 (LFIG…YSVF) and 798 to 818 (LMFL…TFFM). In terms of domain architecture, ABC transmembrane type-1 2 spans 754 to 1043 (LFIGMSTATI…ATSYFPEYAK (290 aa)). N850 is a glycosylation site (N-linked (GlcNAc...) asparagine). 4 consecutive transmembrane segments (helical) span residues 874–894 (FSTV…AFFY), 895–915 (GWQM…GQYL), 978–998 (IQGL…TCAY), and 1017–1037 (VLRV…ATSY). The Cytoplasmic portion of the chain corresponds to 1038 to 1321 (FPEYAKATFA…LTQKQMTEKK (284 aa)). The ABC transporter 2 domain maps to 1077–1315 (VIFKNVRFAY…KGAYYKLTQK (239 aa)). Residue 1112-1119 (GPSGCGKS) participates in ATP binding.

The protein belongs to the ABC transporter superfamily. ABCB family. Multidrug resistance exporter (TC 3.A.1.201) subfamily. Intestinal cells.

The protein localises to the membrane. It catalyses the reaction ATP + H2O + xenobioticSide 1 = ADP + phosphate + xenobioticSide 2.. In terms of biological role, energy-dependent efflux pump responsible for decreased drug accumulation in multidrug-resistant cells. The sequence is that of Multidrug resistance protein pgp-1 (pgp-1) from Caenorhabditis elegans.